The sequence spans 227 residues: Ribonuclease S-5 (227 aa).

Positions 1 to 27 (MGITGMVYVVTMVFLLIVLILSSSTVG) are cleaved as a signal peptide. Q36 lines the RNA pocket. An intrachain disulfide couples C42 to C49. The N-linked (GlcNAc...) asparagine glycan is linked to N45. RNA is bound by residues H60, 97–98 (NV), F107, 110–111 (KE), and 114–115 (KH). Residue H60 is the Proton donor of the active site. C75 and C118 are joined by a disulfide. The active site involves E111. H115 functions as the Proton acceptor in the catalytic mechanism. N143 is a glycosylation site (N-linked (GlcNAc...) asparagine). Disulfide bonds link C182–C220 and C197–C208.

Belongs to the RNase T2 family. In terms of processing, N-glycan at Asn-45 consists of disaccharide (GlcNAc-GlcNAc). N-linked core structure at Asn-143 contains xylose.

It carries out the reaction a ribonucleotidyl-ribonucleotide-RNA + H2O = a 3'-end 3'-phospho-ribonucleotide-RNA + a 5'-end dephospho-ribonucleoside-RNA + H(+). Its function is as follows. Self-incompatibility (SI) is the inherited ability of a flowering plant to prevent self-fertilization by discriminating between self and non-self pollen during pollination. In many species, self-incompatibility is controlled by the single, multiallelic locus S. The polypeptide is Ribonuclease S-5 (Pyrus pyrifolia (Chinese pear)).